Reading from the N-terminus, the 314-residue chain is UPF0761 membrane protein VIBHAR_00593 (314 aa).

Helical transmembrane passes span 41–61 (YLAYITLLSIVPMLTVLLSIL), 104–124 (MTAVGGAFLFVAALMLISNID), 143–163 (FSMYWMVLTLGPILVGASIAV), 185–205 (FLRWLPLLLSFFAFMGLYFLV), 217–237 (IGAAIAAVLFELSKKGFAFYI), and 249–269 (ALAAIPILFVWVYLCWLIVLI).

It belongs to the UPF0761 family.

It is found in the cell inner membrane. This Vibrio campbellii (strain ATCC BAA-1116) protein is UPF0761 membrane protein VIBHAR_00593.